We begin with the raw amino-acid sequence, 496 residues long: Ankyrin repeat domain-containing protein 53 (496 aa).

The span at Met1–Ser15 shows a compositional bias: low complexity. Residues Met1–Thr66 are disordered. Over residues Ala51–Glu60 the composition is skewed to basic and acidic residues. 3 ANK repeats span residues Lys105–Leu135, Asn139–Ala172, and Asn176–Ala205. The segment at Leu292 to His320 is disordered.

As to quaternary structure, interacts with PSRC1; recruited by PSRC1 to the spindle during mitosis. In terms of processing, phosphorylated during mitosis.

The protein resides in the cytoplasm. It is found in the cytoskeleton. Its subcellular location is the spindle. It localises to the spindle pole. In terms of biological role, required for normal progression through mitosis. Involved in chromosome alignment and cytokinesis via regulation of microtubules polymerization. The chain is Ankyrin repeat domain-containing protein 53 (ANKRD53) from Macaca fascicularis (Crab-eating macaque).